The sequence spans 1751 residues: Non-reducing polyketide synthase afvB (1751 aa).

An N-terminal acylcarrier protein transacylase domain (SAT) region spans residues 19-249; the sequence is FRRLRLHSKC…PLPVYGGPCH (231 aa). The region spanning 381 to 811 is the Ketosynthase family 3 (KS3) domain; it reads HEKIAVIGMS…GGNTSLLLEE (431 aa). Residues Cys-554, His-689, and His-730 each act as for beta-ketoacyl synthase activity in the active site. The tract at residues 910 to 1228 is malonyl-CoA:ACP transacylase (MAT) domain; that stretch reads FVFSGQGSFS…SMSALHSAGV (319 aa). The product template (PT) domain stretch occupies residues 1291-1607; the sequence is TALVHHILEE…PRILMSRFFD (317 aa). Residues 1295 to 1429 form an N-terminal hotdog fold region; the sequence is HHILEESFGK…GVVTCGDSHS (135 aa). Residues 1295–1603 enclose the PKS/mFAS DH domain; the sequence is HHILEESFGK…LRPLPRILMS (309 aa). Catalysis depends on His-1327, which acts as the Proton acceptor; for dehydratase activity. The C-terminal hotdog fold stretch occupies residues 1456–1603; it reads LASRVSKDLV…LRPLPRILMS (148 aa). Residue Asp-1514 is the Proton donor; for dehydratase activity of the active site. The segment at 1610-1670 is disordered; that stretch reads DSQYGQMAQQ…KAPISGSWPN (61 aa). Over residues 1612 to 1657 the composition is skewed to polar residues; sequence QYGQMAQQEPSTALPSTPQHTSSAKTTESTPSQQDESDNTSLATPE. The 78-residue stretch at 1670–1747 folds into the Carrier domain; sequence NANSQLVRDA…DLKAYLEGNQ (78 aa). Ser-1707 is subject to O-(pantetheine 4'-phosphoryl)serine.

Pantetheine 4'-phosphate is required as a cofactor. In terms of tissue distribution, expressed mainly in sclerotia, with expression levels 20-fold and 10-fold greater than the expression levels of this gene found in mycelium and conidia, respectively.

It participates in secondary metabolite biosynthesis. Non-reducing polyketide synthase (NRPKS); part of the gene cluster that mediates the biosynthesis of aflavarin, a bicoumarin that exhibits anti-insectan activity against the fungivorous beetle C.hemipterus. Catalyzes the formation of the aromatic polyketide from acetyl coenzyme A and seven malonyl coenzyme A molecules. The chain is Non-reducing polyketide synthase afvB from Aspergillus flavus (strain ATCC 200026 / FGSC A1120 / IAM 13836 / NRRL 3357 / JCM 12722 / SRRC 167).